The chain runs to 167 residues: NAD(P)H-quinone oxidoreductase subunit I, chloroplastic (167 aa).

2 4Fe-4S ferredoxin-type domains span residues 55 to 84 and 95 to 124; these read GRIH…VDWK and LNYS…MTEE. [4Fe-4S] cluster contacts are provided by Cys64, Cys67, Cys70, Cys74, Cys104, Cys107, Cys110, and Cys114.

Belongs to the complex I 23 kDa subunit family. As to quaternary structure, NDH is composed of at least 16 different subunits, 5 of which are encoded in the nucleus. The cofactor is [4Fe-4S] cluster.

It localises to the plastid. The protein resides in the chloroplast thylakoid membrane. The enzyme catalyses a plastoquinone + NADH + (n+1) H(+)(in) = a plastoquinol + NAD(+) + n H(+)(out). It carries out the reaction a plastoquinone + NADPH + (n+1) H(+)(in) = a plastoquinol + NADP(+) + n H(+)(out). In terms of biological role, NDH shuttles electrons from NAD(P)H:plastoquinone, via FMN and iron-sulfur (Fe-S) centers, to quinones in the photosynthetic chain and possibly in a chloroplast respiratory chain. The immediate electron acceptor for the enzyme in this species is believed to be plastoquinone. Couples the redox reaction to proton translocation, and thus conserves the redox energy in a proton gradient. This Panax ginseng (Korean ginseng) protein is NAD(P)H-quinone oxidoreductase subunit I, chloroplastic.